The chain runs to 472 residues: Poly(A) polymerase catalytic subunit (472 aa).

Catalysis depends on residues Asp-194 and Asp-196.

Belongs to the poxviridae poly(A) polymerase catalytic subunit family. In terms of assembly, heterodimer of a large (catalytic) subunit and a small (regulatory) subunit.

It carries out the reaction RNA(n) + ATP = RNA(n)-3'-adenine ribonucleotide + diphosphate. Its function is as follows. Polymerase that creates the 3'-poly(A) tail of mRNA's. The protein is Poly(A) polymerase catalytic subunit (PAPL) of Fowlpox virus (strain NVSL) (FPV).